Here is a 347-residue protein sequence, read N- to C-terminus: Phosphate acyltransferase (347 aa).

It belongs to the PlsX family. In terms of assembly, homodimer. Probably interacts with PlsY.

The protein localises to the cytoplasm. It carries out the reaction a fatty acyl-[ACP] + phosphate = an acyl phosphate + holo-[ACP]. It functions in the pathway lipid metabolism; phospholipid metabolism. Catalyzes the reversible formation of acyl-phosphate (acyl-PO(4)) from acyl-[acyl-carrier-protein] (acyl-ACP). This enzyme utilizes acyl-ACP as fatty acyl donor, but not acyl-CoA. The sequence is that of Phosphate acyltransferase from Pediococcus pentosaceus (strain ATCC 25745 / CCUG 21536 / LMG 10740 / 183-1w).